The chain runs to 1496 residues: Synaptojanin-2 (1496 aa).

An SAC domain is found at 120-444; the sequence is LKKILSSGVF…GHGLSKVFTG (325 aa). The 80-residue stretch at 906–985 folds into the RRM domain; that stretch reads DATVIVNLQS…RAVKIRPKTK (80 aa). Disordered regions lie at residues 1047-1083, 1100-1149, 1205-1357, 1393-1413, 1442-1461, and 1468-1496; these read VVSD…HPTY, GNFR…GTHG, VPES…LQVL, SSAI…AASF, EPLD…SAQV, and RGLP…TLGV. Residues 1063 to 1074 show a composition bias toward low complexity; the sequence is SASTPASKSPAL. A compositionally biased stretch (pro residues) spans 1116 to 1130; that stretch reads RPRPPHPPQRPPPPT. The residue at position 1139 (serine 1139) is a Phosphoserine. A compositionally biased stretch (polar residues) spans 1139–1149; sequence SDASISSGTHG. Pro residues-rich tracts occupy residues 1230 to 1239 and 1279 to 1292; these read PVLPRRPVPR and TPPP…PVPK. Residues 1324–1338 are compositionally biased toward low complexity; the sequence is ELSSPEAPEAPSLAP. 2 stretches are compositionally biased toward basic and acidic residues: residues 1470 to 1480 and 1487 to 1496; these read LPPDHGGKDFS and NKDKRTTLGV.

It belongs to the synaptojanin family. This sequence in the central section; belongs to the inositol 1,4,5-trisphosphate 5-phosphatase family. Binds to GRB2. Isoform 2A binds to SYNJ2BP/OMP25. In terms of tissue distribution, widely expressed. Isoforms 2B1 and 2B2 are concentrated at nerve terminals in brain and at spermatid manchette in testis.

It localises to the cytoplasm. Its subcellular location is the cell membrane. It is found in the presynapse. The protein resides in the cytoskeleton. The protein localises to the membrane raft. It localises to the mitochondrion. The catalysed reaction is a 1,2-diacyl-sn-glycero-3-phospho-(1D-myo-inositol-4,5-bisphosphate) + H2O = a 1,2-diacyl-sn-glycero-3-phospho-(1D-myo-inositol 4-phosphate) + phosphate. Functionally, inositol 5-phosphatase which may be involved in distinct membrane trafficking and signal transduction pathways. May mediate the inhibitory effect of Rac1 on endocytosis. This is Synaptojanin-2 (Synj2) from Rattus norvegicus (Rat).